Consider the following 318-residue polypeptide: Porphobilinogen deaminase (318 aa).

Position 248 is an S-(dipyrrolylmethanemethyl)cysteine (C248).

This sequence belongs to the HMBS family. Monomer. Dipyrromethane serves as cofactor.

The enzyme catalyses 4 porphobilinogen + H2O = hydroxymethylbilane + 4 NH4(+). Its pathway is porphyrin-containing compound metabolism; protoporphyrin-IX biosynthesis; coproporphyrinogen-III from 5-aminolevulinate: step 2/4. Its function is as follows. Tetrapolymerization of the monopyrrole PBG into the hydroxymethylbilane pre-uroporphyrinogen in several discrete steps. The protein is Porphobilinogen deaminase of Caulobacter sp. (strain K31).